The primary structure comprises 109 residues: uncharacterized protein (109 aa).

To M.jannaschii MJ1244 and MJ1245 and M.thermoautotrophicum MTH1110.

This is an uncharacterized protein from Methanococcus maripaludis (Methanococcus deltae).